Here is a 259-residue protein sequence, read N- to C-terminus: UPF0246 protein Pmen_1032 (259 aa).

The protein belongs to the UPF0246 family.

The chain is UPF0246 protein Pmen_1032 from Ectopseudomonas mendocina (strain ymp) (Pseudomonas mendocina).